A 216-amino-acid chain; its full sequence is Large ribosomal subunit protein uL3 (216 aa).

Residues 133–145 show a composition bias toward polar residues; the sequence is GRATHGNSRSHNV. A disordered region spans residues 133–153; sequence GRATHGNSRSHNVPGSIGMAQ. Gln-153 carries the N5-methylglutamine modification.

Belongs to the universal ribosomal protein uL3 family. As to quaternary structure, part of the 50S ribosomal subunit. Forms a cluster with proteins L14 and L19. Methylated by PrmB.

One of the primary rRNA binding proteins, it binds directly near the 3'-end of the 23S rRNA, where it nucleates assembly of the 50S subunit. The protein is Large ribosomal subunit protein uL3 of Burkholderia cenocepacia (strain ATCC BAA-245 / DSM 16553 / LMG 16656 / NCTC 13227 / J2315 / CF5610) (Burkholderia cepacia (strain J2315)).